The primary structure comprises 289 residues: 4-hydroxy-tetrahydrodipicolinate synthase (289 aa).

Thr43 provides a ligand contact to pyruvate. Catalysis depends on Tyr131, which acts as the Proton donor/acceptor. Catalysis depends on Lys160, which acts as the Schiff-base intermediate with substrate. Val200 lines the pyruvate pocket.

It belongs to the DapA family. As to quaternary structure, homotetramer; dimer of dimers.

Its subcellular location is the cytoplasm. The enzyme catalyses L-aspartate 4-semialdehyde + pyruvate = (2S,4S)-4-hydroxy-2,3,4,5-tetrahydrodipicolinate + H2O + H(+). It functions in the pathway amino-acid biosynthesis; L-lysine biosynthesis via DAP pathway; (S)-tetrahydrodipicolinate from L-aspartate: step 3/4. Its function is as follows. Catalyzes the condensation of (S)-aspartate-beta-semialdehyde [(S)-ASA] and pyruvate to 4-hydroxy-tetrahydrodipicolinate (HTPA). This Methanococcus maripaludis (strain C6 / ATCC BAA-1332) protein is 4-hydroxy-tetrahydrodipicolinate synthase.